Reading from the N-terminus, the 396-residue chain is Endo-1,4-beta-xylanase A (396 aa).

A signal peptide spans 1–28; sequence MITLFRKPFVAGLAISLLVGGGIGNVAA. Positions 51–396 constitute a GH10 domain; that stretch reads AWQVASLSER…VKPAYWRIID (346 aa). The active-site Proton donor is glutamate 195. The Nucleophile role is filled by glutamate 301.

The protein belongs to the glycosyl hydrolase 10 (cellulase F) family.

It is found in the secreted. The catalysed reaction is Endohydrolysis of (1-&gt;4)-beta-D-xylosidic linkages in xylans.. It functions in the pathway glycan degradation; xylan degradation. This Halalkalibacterium halodurans (strain ATCC BAA-125 / DSM 18197 / FERM 7344 / JCM 9153 / C-125) (Bacillus halodurans) protein is Endo-1,4-beta-xylanase A (xynA).